A 359-amino-acid chain; its full sequence is Ferredoxin--NADP reductase (359 aa).

Residues D48, Q56, Y61, A101, F139, D304, and S345 each contribute to the FAD site.

It belongs to the ferredoxin--NADP reductase type 2 family. Homodimer. FAD is required as a cofactor.

The catalysed reaction is 2 reduced [2Fe-2S]-[ferredoxin] + NADP(+) + H(+) = 2 oxidized [2Fe-2S]-[ferredoxin] + NADPH. The polypeptide is Ferredoxin--NADP reductase (Ralstonia pickettii (strain 12J)).